A 499-amino-acid chain; its full sequence is MEKQYVLAIDQGTTSSRAMLFDRQGKVAGVAQREFGQIFPQPGWVEHNPREIMTSVYTTITELLNNAQIDARAIAGIGITNQRETAVVWDKATGQPIYNAIVWQSRQTKDICTQLKEAGHEQMVREKTGLLIDAYFSGTKVKWILDHVEGARERAQKGELAFGTIDSWLIWNLTGGKVHVTDYTNASRTMMFNIHTLEWDAELLAMLDVPAQMLPDVRSSSEIYGMTQTQYFYGEQVPIAGIAGDQQAALFGQACFEPGMAKNTYGTGCFMLMNTGDKAVASKAGLLTTIAWGIDGKVEYALEGAIFVAGSVVQWLRDGLRMLGKASDSQAYAERAGDNDGVYIVPAFVGLGAPYWRSDIRGAVFGLTRGTTKEHFVRAAVESMAYQTRDVLTAMQSDSGIELKELRADGGAIANDFMAQFQSDILNVPVLRPEVAETTALGAAYLAGLATGFWGSREEIAKQWAVDRRFEPAMADDKRQGLYAGWQQAVEATMGFRIS.

ADP is bound at residue T13. ATP contacts are provided by T13, T14, and S15. T13 is a sn-glycerol 3-phosphate binding site. ADP is bound at residue R17. R83, E84, Y135, and D245 together coordinate sn-glycerol 3-phosphate. Glycerol contacts are provided by R83, E84, Y135, D245, and Q246. Positions 267 and 310 each coordinate ADP. Residues T267, G310, Q314, and G411 each coordinate ATP. G411 and N415 together coordinate ADP.

It belongs to the FGGY kinase family.

The catalysed reaction is glycerol + ATP = sn-glycerol 3-phosphate + ADP + H(+). It participates in polyol metabolism; glycerol degradation via glycerol kinase pathway; sn-glycerol 3-phosphate from glycerol: step 1/1. With respect to regulation, inhibited by fructose 1,6-bisphosphate (FBP). Key enzyme in the regulation of glycerol uptake and metabolism. Catalyzes the phosphorylation of glycerol to yield sn-glycerol 3-phosphate. The sequence is that of Glycerol kinase from Xanthomonas euvesicatoria pv. vesicatoria (strain 85-10) (Xanthomonas campestris pv. vesicatoria).